Here is a 235-residue protein sequence, read N- to C-terminus: Probable WRKY transcription factor 66 (235 aa).

The WRKY DNA-binding region spans 79-147 (SPTPAHIDGF…YVGQHACEAP (69 aa)).

It belongs to the WRKY group III family.

Its subcellular location is the nucleus. Its function is as follows. Transcription factor. Interacts specifically with the W box (5'-(T)TGAC[CT]-3'), a frequently occurring elicitor-responsive cis-acting element. This chain is Probable WRKY transcription factor 66 (WRKY66), found in Arabidopsis thaliana (Mouse-ear cress).